Reading from the N-terminus, the 393-residue chain is Succinate--CoA ligase [ADP-forming] subunit beta (393 aa).

The ATP-grasp domain maps to 9 to 237 (RDLFAKHGVP…KDAANPLEAA (229 aa)). ATP contacts are provided by residues Lys45, 52–54 (GRG), Glu92, Pro95, and Glu100. Mg(2+) is bound by residues Asn192 and Asp206. Substrate contacts are provided by residues Asn257 and 319–321 (GIT).

The protein belongs to the succinate/malate CoA ligase beta subunit family. As to quaternary structure, heterotetramer of two alpha and two beta subunits. Mg(2+) is required as a cofactor.

It carries out the reaction succinate + ATP + CoA = succinyl-CoA + ADP + phosphate. The catalysed reaction is GTP + succinate + CoA = succinyl-CoA + GDP + phosphate. It participates in carbohydrate metabolism; tricarboxylic acid cycle; succinate from succinyl-CoA (ligase route): step 1/1. Succinyl-CoA synthetase functions in the citric acid cycle (TCA), coupling the hydrolysis of succinyl-CoA to the synthesis of either ATP or GTP and thus represents the only step of substrate-level phosphorylation in the TCA. The beta subunit provides nucleotide specificity of the enzyme and binds the substrate succinate, while the binding sites for coenzyme A and phosphate are found in the alpha subunit. This is Succinate--CoA ligase [ADP-forming] subunit beta from Streptomyces griseus subsp. griseus (strain JCM 4626 / CBS 651.72 / NBRC 13350 / KCC S-0626 / ISP 5235).